A 133-amino-acid chain; its full sequence is Thioredoxin-like protein CXXS1 (133 aa).

The 120-residue stretch at methionine 1 to glutamate 120 folds into the Thioredoxin domain.

This sequence belongs to the thioredoxin family.

The chain is Thioredoxin-like protein CXXS1 from Oryza sativa subsp. japonica (Rice).